The primary structure comprises 397 residues: P-selectin glycoprotein ligand 1 (397 aa).

The signal sequence occupies residues 1 to 17; that stretch reads MSPSFLVLLTILGPGNS. A propeptide spanning residues 18-41 is cleaved from the precursor; sequence LQLQDPWGHETKEAPGPVHLRERR. At 18–307 the chain is on the extracellular side; that stretch reads LQLQDPWGHE…SSDLIPVKQC (290 aa). Tyrosine 54 carries the sulfotyrosine modification. Residue threonine 58 is glycosylated (O-linked (GalNAc...) threonine). A glycan (N-linked (GlcNAc...) asparagine) is linked at asparagine 66. The segment at 89-261 is disordered; it reads TSAGTSERAT…TMETASTESN (173 aa). Polar residues predominate over residues 120–198; that stretch reads STDSATQWSL…PMEAETSQPA (79 aa). Repeat copies occupy residues 126–135, 136–145, 146–155, 156–165, 166–175, 176–185, 186–195, 196–205, 206–215, and 216–225. The segment at 126–225 is 10 X 10 AA tandem repeats; sequence QWSLTSVETV…KPAPTEAETT (100 aa). Residues 236–261 show a composition bias toward polar residues; that stretch reads LFTTSAATEVPSTEPTTMETASTESN. N-linked (GlcNAc...) asparagine glycosylation is present at asparagine 261. The chain crosses the membrane as a helical span at residues 308–328; sequence LLIILILASLATIFLVCTVVL. The Cytoplasmic portion of the chain corresponds to 329-397; the sequence is AVRLSRKTHM…DDLTLHSFLP (69 aa). Residues 364–390 are disordered; the sequence is PVTANGGLPKVQDLKTEPSGDRDGDDL. Residues 375 to 390 show a composition bias toward basic and acidic residues; that stretch reads QDLKTEPSGDRDGDDL. Position 391 is a phosphothreonine (threonine 391). Position 394 is a phosphoserine (serine 394).

In terms of assembly, homodimer; disulfide-linked. Interacts with P- and E-selectins, through their lectin/EGF domains. Interaction with P-selectin requires sialyl Lewis X glycan modification and tyrosine sulfation, probably on Tyr-54, for high affinity binding. Dimerization appears not to be required for P-selectin/SELP binding. Interacts with SNX20. Interacts with MSN and SYK; mediates SYK activation downstream of SELPLG. Interacts with HAVCR1. Post-translationally, displays complex, core-2, sialylated and fucosylated O-linked oligosaccharides, at least some of which appear to contain poly-N-acetyllactosamine with varying degrees of substitution. Mainly disialylated or neutral forms of the core-2 tetrasaccharide, Galbeta1--&gt;4GlcNAcbeta1--&gt;6(Galbeta1--&gt;3)GalNAcOH. The GlcN:GalN ratio is approximately 2:1 and the Man:Fuc ratio 3:5. Contains about 14% fucose with alpha-1,3 linkage present in two forms: One species is a disialylated, monofucosylated glycan, and the other, a monosialylated, trifucosylated glycan with a polylactosamine backbone. The fucosylated forms carry the Lewis antigen and are important for interaction with selectins and for functioning. No sulfated O-glycans. Some N-glycosylation. As to expression, highly expressed in blood, bone marrow, brain, adipose tissue, spleen, and thymus. Also expressed in heart, kidney, liver, muscle, ovary, and stomach.

It is found in the cell membrane. An SLe(x)-type proteoglycan, which through high affinity, calcium-dependent interactions with E- and P-selectins, mediates rapid rolling of leukocytes over vascular surfaces during the initial steps in inflammation. Critical for the initial leukocyte capture. The protein is P-selectin glycoprotein ligand 1 (Selplg) of Mus musculus (Mouse).